The chain runs to 134 residues: Protein Turandot E (134 aa).

Positions 1–38 are cleaved as a signal peptide; it reads MSYTRTVHSSTSILKMNSALQISCLLVVLGCLLGSGHC.

It belongs to the Turandot family.

It is found in the secreted. A humoral factor that may play a role in stress tolerance. In Drosophila simulans (Fruit fly), this protein is Protein Turandot E.